The chain runs to 333 residues: Small GTPase-like protein LIP2 (333 aa).

Residues 11-288 (NKEHMVAPLC…YKYNTLPQHN (278 aa)) are small GTPase-like. Residues 29–36 (GDSGVGKS), 90–94 (DVSGH), and 160–163 (NKAD) each bind GTP. Residues 242 to 253 (SPSSAWSLSHAP) show a composition bias toward polar residues. A disordered region spans residues 242–265 (SPSSAWSLSHAPSQRLDEGTSDED).

Belongs to the small GTPase superfamily.

The protein is Small GTPase-like protein LIP2 of Arabidopsis thaliana (Mouse-ear cress).